The primary structure comprises 685 residues: Glycine--tRNA ligase beta subunit (685 aa).

The interval 58–77 (GLTAQSPTTREERKGPRTDA) is disordered. Residues 66–77 (TREERKGPRTDA) are compositionally biased toward basic and acidic residues.

The protein belongs to the class-II aminoacyl-tRNA synthetase family. Tetramer of two alpha and two beta subunits.

It is found in the cytoplasm. It carries out the reaction tRNA(Gly) + glycine + ATP = glycyl-tRNA(Gly) + AMP + diphosphate. The protein is Glycine--tRNA ligase beta subunit of Paracoccus denitrificans (strain Pd 1222).